The chain runs to 344 residues: Dihydroorotase (344 aa).

Residues His-13 and His-15 each contribute to the Zn(2+) site. Substrate is bound by residues His-15–Arg-17 and Asn-41. Lys-99, His-136, and His-174 together coordinate Zn(2+). Lys-99 carries the post-translational modification N6-carboxylysine. His-136 contributes to the substrate binding site. Leu-219 contacts substrate. Zn(2+) is bound at residue Asp-247. The active site involves Asp-247. Substrate contacts are provided by His-251 and Ala-263.

It belongs to the metallo-dependent hydrolases superfamily. DHOase family. Class II DHOase subfamily. Homodimer. It depends on Zn(2+) as a cofactor.

The catalysed reaction is (S)-dihydroorotate + H2O = N-carbamoyl-L-aspartate + H(+). It participates in pyrimidine metabolism; UMP biosynthesis via de novo pathway; (S)-dihydroorotate from bicarbonate: step 3/3. Functionally, catalyzes the reversible cyclization of carbamoyl aspartate to dihydroorotate. This is Dihydroorotase from Idiomarina loihiensis (strain ATCC BAA-735 / DSM 15497 / L2-TR).